Here is a 141-residue protein sequence, read N- to C-terminus: Hemoglobin subunit alpha-D/D' (141 aa).

One can recognise a Globin domain in the interval 1 to 141 (MLTADDKKLI…VAAVLAEKYR (141 aa)). Heme b-binding residues include histidine 58 and histidine 87.

Belongs to the globin family. In terms of assembly, heterotetramer of two alpha-D chains and two beta chains. In terms of tissue distribution, red blood cells.

In terms of biological role, involved in oxygen transport from the lung to the various peripheral tissues. The protein is Hemoglobin subunit alpha-D/D' (HBAD) of Gyps rueppelli (Rueppell's griffon).